Consider the following 1193-residue polypeptide: DNA-directed RNA polymerase subunit beta (1193 aa).

A compositionally biased stretch (acidic residues) spans 1152–1161; sequence IEMRDLEDDE. A disordered region spans residues 1152–1193; it reads IEMRDLEDDEETKKADGLALSNDEDAADLAPVDLERDAVTKE. The segment covering 1184–1193 has biased composition (basic and acidic residues); that stretch reads DLERDAVTKE.

This sequence belongs to the RNA polymerase beta chain family. As to quaternary structure, the RNAP catalytic core consists of 2 alpha, 1 beta, 1 beta' and 1 omega subunit. When a sigma factor is associated with the core the holoenzyme is formed, which can initiate transcription.

The enzyme catalyses RNA(n) + a ribonucleoside 5'-triphosphate = RNA(n+1) + diphosphate. Functionally, DNA-dependent RNA polymerase catalyzes the transcription of DNA into RNA using the four ribonucleoside triphosphates as substrates. The sequence is that of DNA-directed RNA polymerase subunit beta from Bacillus pumilus (strain SAFR-032).